Consider the following 396-residue polypeptide: Ribosomal RNA large subunit methyltransferase I (396 aa).

One can recognise a PUA domain in the interval 2–79; it reads SVFIYLVKGR…KEETVDLDFF (78 aa).

The protein belongs to the methyltransferase superfamily. RlmI family.

Its subcellular location is the cytoplasm. It catalyses the reaction cytidine(1962) in 23S rRNA + S-adenosyl-L-methionine = 5-methylcytidine(1962) in 23S rRNA + S-adenosyl-L-homocysteine + H(+). Functionally, specifically methylates the cytosine at position 1962 (m5C1962) of 23S rRNA. The polypeptide is Ribosomal RNA large subunit methyltransferase I (Aeromonas salmonicida (strain A449)).